Reading from the N-terminus, the 469-residue chain is Adenosylhomocysteinase (469 aa).

Substrate-binding residues include threonine 63, aspartate 139, and glutamate 164. 165 to 167 serves as a coordination point for NAD(+); sequence TTT. The substrate site is built by lysine 194 and aspartate 198. NAD(+) is bound by residues asparagine 199, 228-233, glutamate 251, asparagine 300, 321-323, and asparagine 375; these read GYGDVG and IGH.

This sequence belongs to the adenosylhomocysteinase family. NAD(+) serves as cofactor.

It localises to the cytoplasm. The catalysed reaction is S-adenosyl-L-homocysteine + H2O = L-homocysteine + adenosine. It participates in amino-acid biosynthesis; L-homocysteine biosynthesis; L-homocysteine from S-adenosyl-L-homocysteine: step 1/1. Functionally, may play a key role in the regulation of the intracellular concentration of adenosylhomocysteine. This is Adenosylhomocysteinase from Pseudomonas fluorescens (strain Pf0-1).